The following is a 344-amino-acid chain: Sulfate/thiosulfate import ATP-binding protein CysA (344 aa).

Positions 3–233 (ILIDNVSKNF…PESAFVMSFL (231 aa)) constitute an ABC transporter domain. 35–42 (GPSGCGKS) contacts ATP.

Belongs to the ABC transporter superfamily. Sulfate/tungstate importer (TC 3.A.1.6) family. The complex is composed of two ATP-binding proteins (CysA), two transmembrane proteins (CysT and CysW) and a solute-binding protein (CysP).

Its subcellular location is the cell inner membrane. It carries out the reaction sulfate(out) + ATP + H2O = sulfate(in) + ADP + phosphate + H(+). It catalyses the reaction thiosulfate(out) + ATP + H2O = thiosulfate(in) + ADP + phosphate + H(+). Its function is as follows. Part of the ABC transporter complex CysAWTP involved in sulfate/thiosulfate import. Responsible for energy coupling to the transport system. In Gloeobacter violaceus (strain ATCC 29082 / PCC 7421), this protein is Sulfate/thiosulfate import ATP-binding protein CysA.